Here is a 142-residue protein sequence, read N- to C-terminus: Hemoglobin subunit alpha-1 (142 aa).

One can recognise a Globin domain in the interval 2-142 (VLSPADKTNV…VSTVLTSKYR (141 aa)). O2 is bound at residue His-59. Position 88 (His-88) interacts with heme b.

Belongs to the globin family. As to quaternary structure, heterotetramer of two alpha chains and two beta chains. Red blood cells.

Its function is as follows. Involved in oxygen transport from the lung to the various peripheral tissues. In terms of biological role, hemopressin acts as an antagonist peptide of the cannabinoid receptor CNR1. Hemopressin-binding efficiently blocks cannabinoid receptor CNR1 and subsequent signaling. The sequence is that of Hemoglobin subunit alpha-1 (HBA1) from Hylobates lar (Lar gibbon).